We begin with the raw amino-acid sequence, 709 residues long: Nucleobase-ascorbate transporter 12 (709 aa).

The interval 1 to 145 (MSSSDPKPGP…GSGDPVRRPG (145 aa)) is disordered. Positions 7 to 19 (KPGPKPGPWPPTP) are enriched in pro residues. Ser40 bears the Phosphoserine mark. Over residues 41–53 (GETTATDSSSGQL) the composition is skewed to polar residues. Basic and acidic residues-rich tracts occupy residues 89 to 98 (ETDKDKKEKP) and 113 to 122 (QPVKRRRDSD). 12 consecutive transmembrane segments (helical) span residues 190 to 210 (YLSMLGSLILVPLVIVPAMGG), 218 to 238 (VVSTVLFVSGITTLLHTSFGS), 240 to 260 (LPLIQGPSFVFLAPALAIINS), 283 to 303 (IIIGSAFQAVLGYSGLMSLIL), 308 to 328 (PVVVAPTVAAVGLSFYSYGFP), 329 to 349 (LVGKCLEIGVVQILLVIIFAL), 361 to 381 (IFLIYAVPLSLAITWAAAFLL), 438 to 458 (WGVPLFNWKMAFVMCVVSVIA), 530 to 550 (GACVLVIFSLVGKVGGFLASI), 551 to 571 (PQVMVASLLCFMWAMFTALGL), 585 to 605 (IIIVGLSLFFSLSVPAYFQQY), and 639 to 659 (YVMNTLLSMSMVIAFIMAVIL).

The protein belongs to the nucleobase:cation symporter-2 (NCS2) (TC 2.A.40) family. Ubiquitous.

Its subcellular location is the cell membrane. This is Nucleobase-ascorbate transporter 12 (NAT12) from Arabidopsis thaliana (Mouse-ear cress).